The following is a 375-amino-acid chain: Histidine biosynthesis bifunctional protein HisB (375 aa).

Positions Met1 to Pro168 are histidinol-phosphatase. Asp8 (nucleophile) is an active-site residue. Mg(2+) contacts are provided by Asp8, Asp10, and Asp128. The active-site Proton donor is Asp10. The imidazoleglycerol-phosphate dehydratase stretch occupies residues Arg169–Leu375.

The protein in the N-terminal section; belongs to the histidinol-phosphatase family. In the C-terminal section; belongs to the imidazoleglycerol-phosphate dehydratase family. Mg(2+) serves as cofactor.

The protein localises to the cytoplasm. The catalysed reaction is D-erythro-1-(imidazol-4-yl)glycerol 3-phosphate = 3-(imidazol-4-yl)-2-oxopropyl phosphate + H2O. It catalyses the reaction L-histidinol phosphate + H2O = L-histidinol + phosphate. It functions in the pathway amino-acid biosynthesis; L-histidine biosynthesis; L-histidine from 5-phospho-alpha-D-ribose 1-diphosphate: step 6/9. The protein operates within amino-acid biosynthesis; L-histidine biosynthesis; L-histidine from 5-phospho-alpha-D-ribose 1-diphosphate: step 8/9. This is Histidine biosynthesis bifunctional protein HisB from Xylella fastidiosa (strain Temecula1 / ATCC 700964).